We begin with the raw amino-acid sequence, 598 residues long: Phospholipase B-like protein G (598 aa).

The signal sequence occupies residues 1 to 24; sequence MIKSYYLFFIILIFLIFINNFILC. 9 N-linked (GlcNAc...) asparagine glycosylation sites follow: Asn50, Asn98, Asn173, Asn341, Asn368, Asn450, Asn480, Asn526, and Asn576.

This sequence belongs to the phospholipase B-like family.

It is found in the secreted. Probable phospholipase. In Dictyostelium discoideum (Social amoeba), this protein is Phospholipase B-like protein G (plbG).